A 221-amino-acid chain; its full sequence is Histidine biosynthesis bifunctional protein HisIE (221 aa).

Residues 1-121 (MNITKIDWQK…KKQQFANWAW (121 aa)) form a phosphoribosyl-AMP cyclohydrolase region. Residues 122–221 (FIKLEQHLKE…IGLHPEGGNK (100 aa)) are phosphoribosyl-ATP pyrophosphohydrolase.

In the N-terminal section; belongs to the PRA-CH family. The protein in the C-terminal section; belongs to the PRA-PH family.

The protein localises to the cytoplasm. It carries out the reaction 1-(5-phospho-beta-D-ribosyl)-ATP + H2O = 1-(5-phospho-beta-D-ribosyl)-5'-AMP + diphosphate + H(+). It catalyses the reaction 1-(5-phospho-beta-D-ribosyl)-5'-AMP + H2O = 1-(5-phospho-beta-D-ribosyl)-5-[(5-phospho-beta-D-ribosylamino)methylideneamino]imidazole-4-carboxamide. It functions in the pathway amino-acid biosynthesis; L-histidine biosynthesis; L-histidine from 5-phospho-alpha-D-ribose 1-diphosphate: step 2/9. Its pathway is amino-acid biosynthesis; L-histidine biosynthesis; L-histidine from 5-phospho-alpha-D-ribose 1-diphosphate: step 3/9. The protein is Histidine biosynthesis bifunctional protein HisIE (hisI) of Haemophilus influenzae (strain ATCC 51907 / DSM 11121 / KW20 / Rd).